A 1365-amino-acid polypeptide reads, in one-letter code: Histone-lysine N-methyltransferase NSD2 (1365 aa).

2 positions are modified to phosphothreonine: Thr-110 and Thr-114. Residue Ser-121 is modified to Phosphoserine. The disordered stretch occupies residues 149–169; the sequence is ADVSQSEENEQKSDNKTRRNR. Residue Ser-172 is modified to Phosphoserine. The region spanning 222–286 is the PWWP 1 domain; the sequence is VGDLVWSKVS…FEKSLVAFEG (65 aa). 3 disordered regions span residues 373–455, 513–567, and 594–658; these read MVDS…RKGD, QSEE…DKTA, and CKPL…SKKS. Phosphoserine is present on Ser-376. Phosphothreonine is present on Thr-422. Positions 453–521 form a DNA-binding region, HMG box; it reads KGDSAAQFLV…AQSEEDSGNG (69 aa). A compositionally biased stretch (basic and acidic residues) spans 552–567; it reads DKHSLRKRETITDKTA. Polar residues predominate over residues 603–623; sequence ASATASSALGFNKSSSPSASL. Over residues 632–648 the composition is skewed to acidic residues; the sequence is PGDEPSESPYESADETQ. 3 consecutive PHD-type zinc fingers follow at residues 667–713, 714–770, and 831–875; these read EYVC…CASG, IHSC…CHAS, and VSWC…CRAG. Residues 880–942 form the PWWP 2 domain; it reads FQDIIWVKLG…QARVFPYMEG (63 aa). One can recognise an AWS domain in the interval 1011–1061; that stretch reads SEIPKCNCKPTDENPCGSDSECLNRMLMFECHPQVCPAGEYCQNQCFTKRQ. Zn(2+)-binding residues include Cys-1016, Cys-1018, Cys-1026, Cys-1032, Cys-1041, Cys-1046, and Cys-1052. Positions 1063-1180 constitute an SET domain; it reads PETKIIKTDG…AGTELTFNYN (118 aa). Residues Trp-1075, 1115–1118, and 1141–1142 each bind S-adenosyl-L-methionine; these read THFY and NH. Zn(2+) is bound at residue Cys-1144. Asn-1186 contacts S-adenosyl-L-methionine. Residues 1187–1203 enclose the Post-SET domain; it reads EKTVCRCGASNCSGFLG. Cys-1191 provides a ligand contact to Zn(2+). Position 1192 (Arg-1192) interacts with S-adenosyl-L-methionine. Zn(2+) contacts are provided by Cys-1193 and Cys-1198. Residues 1206–1232 form a disordered region; it reads PKTSASLSSEEKGKKAKKKTRRRRAKG. A compositionally biased stretch (basic residues) spans 1219 to 1230; the sequence is KKAKKKTRRRRA. The segment at 1239-1286 adopts a PHD-type 4; atypical zinc-finger fold; it reads EDECFRCGDGGQLVLCDRKFCTKAYHLSCLGLGKRPFGKWECPWHHCD. Residues 1329 to 1365 form a disordered region; it reads RADSSSSTKTEKPFPESLKSKGKRKKRRCWRRVTDGK. The span at 1348–1359 shows a compositional bias: basic residues; it reads SKGKRKKRRCWR.

The protein belongs to the class V-like SAM-binding methyltransferase superfamily. Histone-lysine methyltransferase family. SET2 subfamily. As to quaternary structure, interacts with HDAC1. Interacts (via PHD-type zinc fingers 1, 2 and 3) with SALL1. Interacts (via PHD-type 1, 2 and 3) with SALL4. Interacts with NANOG. Interacts with OGT. Interacts (via HMG box) with NKX2-5. During B-cell development, expressed in early B2 cell progenitors (pre- and pro-B cells) with a decrease in expression at later stages.

The protein resides in the nucleus. It localises to the chromosome. It carries out the reaction L-lysyl(36)-[histone H3] + S-adenosyl-L-methionine = N(6)-methyl-L-lysyl(36)-[histone H3] + S-adenosyl-L-homocysteine + H(+). It catalyses the reaction L-lysyl(36)-[histone H3] + 2 S-adenosyl-L-methionine = N(6),N(6)-dimethyl-L-lysyl(36)-[histone H3] + 2 S-adenosyl-L-homocysteine + 2 H(+). In terms of biological role, histone methyltransferase which specifically dimethylates nucleosomal histone H3 at 'Lys-36' (H3K36me2). Also monomethylates nucleosomal histone H3 at 'Lys-36' (H3K36me) in vitro. Does not trimethylate nucleosomal histone H3 at 'Lys-36' (H3K36me3). However, specifically trimethylates histone H3 at 'Lys-36' (H3K36me3) at euchromatic regions in embryonic stem (ES) cells. By methylating histone H3 at 'Lys-36', involved in the regulation of gene transcription during various biological processes. In ES cells, associates with developmental transcription factors such as SALL1 and represses inappropriate gene transcription mediated by histone deacetylation. During heart development, associates with transcription factor NKX2-5 to repress transcription of NKX2-5 target genes. Plays an essential role in adipogenesis, by regulating expression of genes involved in pre-adipocyte differentiation. During T-cell receptor (TCR) and CD28-mediated T-cell activation, promotes the transcription of transcription factor BCL6 which is required for follicular helper T (Tfh) cell differentiation. During B-cell development, required for the generation of the B1 lineage. During B2 cell activation, may contribute to the control of isotype class switch recombination (CRS), splenic germinal center formation, and the humoral immune response. Plays a role in class switch recombination of the immunoglobulin heavy chain (IgH) locus during B-cell activation. By regulating the methylation of histone H3 at 'Lys-36' and histone H4 at 'Lys-20' at the IgH locus, involved in TP53BP1 recruitment to the IgH switch region and promotes the transcription of IgA. Histone methyltransferase which specifically dimethylates nucleosomal histone H3 at 'Lys-36' (H3K36me2). Mono-, di- and tri-methylates histone H3 at 'Lys-27' (H3K27me, H3K27me2, H3K27me3). Methylation of histone H3 at 'Lys-27' is controversial. May act as a transcription regulator that binds DNA and suppresses IL5 transcription through HDAC recruitment. The protein is Histone-lysine N-methyltransferase NSD2 (Nsd2) of Mus musculus (Mouse).